Here is a 350-residue protein sequence, read N- to C-terminus: S-adenosylmethionine:tRNA ribosyltransferase-isomerase (350 aa).

It belongs to the QueA family. In terms of assembly, monomer.

It localises to the cytoplasm. It carries out the reaction 7-aminomethyl-7-carbaguanosine(34) in tRNA + S-adenosyl-L-methionine = epoxyqueuosine(34) in tRNA + adenine + L-methionine + 2 H(+). The protein operates within tRNA modification; tRNA-queuosine biosynthesis. Its function is as follows. Transfers and isomerizes the ribose moiety from AdoMet to the 7-aminomethyl group of 7-deazaguanine (preQ1-tRNA) to give epoxyqueuosine (oQ-tRNA). The polypeptide is S-adenosylmethionine:tRNA ribosyltransferase-isomerase (Bacillus cereus (strain Q1)).